Consider the following 981-residue polypeptide: Lateral signaling target protein 2 homolog (981 aa).

The segment at 308–462 (PLGSSSIEAP…LESSDDDTDE (155 aa)) is disordered. Composition is skewed to low complexity over residues 326 to 356 (TTSS…TTNT), 369 to 380 (NNHNSNSNSSTN), 390 to 404 (SPSM…TPTA), and 412 to 433 (PSHS…PADW). The span at 434-462 (SDGDDEDEDDDDIEVDEEDLESSDDDTDE) shows a compositional bias: acidic residues. Phosphoserine is present on residues Ser544 and Ser545. Disordered regions lie at residues 561–642 (EQMQ…SSLS) and 749–897 (DNVF…SPPA). The segment covering 576 to 611 (HSHRHHQRHHHHHHHRHSHQHRQPHPHRTTRSGRKR) has biased composition (basic residues). Positions 630-642 (LASGDTSAASSLS) are enriched in low complexity. Polar residues predominate over residues 760 to 791 (ATGQRHSAGASMQRNNTIDLASQSGEGSPSGA). The residue at position 805 (Ser805) is a Phosphoserine. Low complexity-rich tracts occupy residues 811-866 (AASS…PVSA) and 883-896 (PSSA…LSPP). Residues 901 to 961 (DGKAPRCMAC…VCRDCYVREV (61 aa)) form an FYVE-type zinc finger. The Zn(2+) site is built by Cys907, Cys910, Cys923, Cys926, Cys931, Cys934, Cys953, and Cys956.

Belongs to the lst-2 family.

Functionally, negative regulator of epidermal growth factor receptor (EGFR) signaling. In Drosophila erecta (Fruit fly), this protein is Lateral signaling target protein 2 homolog.